The sequence spans 238 residues: Complement C1q-like protein 4 (238 aa).

An N-terminal signal peptide occupies residues 1–15 (MVLLLLVAIPLLVHS). The interval 37-102 (SRGQGPDGAP…PGPGPGGAAP (66 aa)) is disordered. The Collagen-like domain maps to 53–96 (PPGAKGEVGRRGKAGLRGPPGPPGPRGPPGEPGRPGPPGPPGPG). A compositionally biased stretch (pro residues) spans 71–96 (PPGPPGPRGPPGEPGRPGPPGPPGPG). In terms of domain architecture, C1q spans 105 to 238 (GYVPRIAFYA…TFSGFIIYPD (134 aa)).

Forms homooligomers, predominantly dimers or trimers. Forms heterooligomers with C1QL1, C1QL2 and C1QL3, when proteins are coexpressed; this interaction does not occur after secretion. Interacts with ADGRB3. Highly expressed in testis and adipose tissue, brown adipose tissue expressing higher levels than subcutaneous and visceral white adipose tissue. In gonadal fat pad, expressed at lower levels in adipocytes than in the stromal vascular fraction (VSP), which contains preadipocytes, fibroblasts, endothelial cells and occasional immune cells. Expression exhibits sexually dimorphism, with higher levels in females than in males.

The protein resides in the secreted. Its function is as follows. May regulate the number of excitatory synapses that are formed on hippocampus neurons. Has no effect on inhibitory synapses. May inhibit adipocyte differentiation at an early stage of the process. This is Complement C1q-like protein 4 (C1ql4) from Mus musculus (Mouse).